A 255-amino-acid polypeptide reads, in one-letter code: Acetyl-coenzyme A carboxylase carboxyl transferase subunit alpha (255 aa).

The CoA carboxyltransferase C-terminal domain occupies 1–235 (MNIAKIVREA…KKELQTELAR (235 aa)).

Belongs to the AccA family. Acetyl-CoA carboxylase is a heterohexamer composed of biotin carboxyl carrier protein (AccB), biotin carboxylase (AccC) and two subunits each of ACCase subunit alpha (AccA) and ACCase subunit beta (AccD).

It is found in the cytoplasm. It catalyses the reaction N(6)-carboxybiotinyl-L-lysyl-[protein] + acetyl-CoA = N(6)-biotinyl-L-lysyl-[protein] + malonyl-CoA. It functions in the pathway lipid metabolism; malonyl-CoA biosynthesis; malonyl-CoA from acetyl-CoA: step 1/1. In terms of biological role, component of the acetyl coenzyme A carboxylase (ACC) complex. First, biotin carboxylase catalyzes the carboxylation of biotin on its carrier protein (BCCP) and then the CO(2) group is transferred by the carboxyltransferase to acetyl-CoA to form malonyl-CoA. The sequence is that of Acetyl-coenzyme A carboxylase carboxyl transferase subunit alpha from Streptococcus pneumoniae serotype 2 (strain D39 / NCTC 7466).